A 480-amino-acid polypeptide reads, in one-letter code: Aspartyl/glutamyl-tRNA(Asn/Gln) amidotransferase subunit B (480 aa).

Belongs to the GatB/GatE family. GatB subfamily. Heterotrimer of A, B and C subunits.

The enzyme catalyses L-glutamyl-tRNA(Gln) + L-glutamine + ATP + H2O = L-glutaminyl-tRNA(Gln) + L-glutamate + ADP + phosphate + H(+). It catalyses the reaction L-aspartyl-tRNA(Asn) + L-glutamine + ATP + H2O = L-asparaginyl-tRNA(Asn) + L-glutamate + ADP + phosphate + 2 H(+). Functionally, allows the formation of correctly charged Asn-tRNA(Asn) or Gln-tRNA(Gln) through the transamidation of misacylated Asp-tRNA(Asn) or Glu-tRNA(Gln) in organisms which lack either or both of asparaginyl-tRNA or glutaminyl-tRNA synthetases. The reaction takes place in the presence of glutamine and ATP through an activated phospho-Asp-tRNA(Asn) or phospho-Glu-tRNA(Gln). The protein is Aspartyl/glutamyl-tRNA(Asn/Gln) amidotransferase subunit B of Streptococcus pneumoniae (strain CGSP14).